We begin with the raw amino-acid sequence, 121 residues long: Large ribosomal subunit protein bL12 (121 aa).

This sequence belongs to the bacterial ribosomal protein bL12 family. In terms of assembly, homodimer. Part of the ribosomal stalk of the 50S ribosomal subunit. Forms a multimeric L10(L12)X complex, where L10 forms an elongated spine to which 2 to 4 L12 dimers bind in a sequential fashion. Binds GTP-bound translation factors.

Forms part of the ribosomal stalk which helps the ribosome interact with GTP-bound translation factors. Is thus essential for accurate translation. This chain is Large ribosomal subunit protein bL12, found in Pseudomonas fluorescens (strain Pf0-1).